Here is an 815-residue protein sequence, read N- to C-terminus: MSSSTISAMLMGAADGDLNYLNSTPIGSSLLDDMGLDEDDFQSSSFEVFIPESYDSKFMSDYEYISKNANRFMKCKSREYAIQGELLKFFIIVRPPDDSKKRQKQQQIQQLLQQKQKQILINQSNTSTPPPPQKSIITNSDSPRLIVSDTTSTTKIEEQQPPPPPPQEEQQEQDSITVLQPSTSSSSNLLFELQLRLASDYEKSTKENQNPLNIIDYNPKHSFVNTEMKNDHISSSKSATSYLRQNTLNVNNNKNNKNQNNNNNNNIENSNNTNSRFIGDVVEVSSPFTFKDTSNPYQKPNFFRLSNGDLVFPIEVPIYIREINEDKLITMVIKINRPKNNRNNIASSDNKLERLIQGGAVDKSVNYTMRTSTASLGVGGTIHNNKVTRTILKNFTLIQPMKVLLQSNTTIGCKNLICVSLENTHPTSNITIKSLDIYLFHVLNMESTTIIDSVSSVSSIPTHRQIGNLVKVNEHYVISNLSNHRLPIELEPSNQYSMVLSVEPSSIQKTLQPTEGFHTKVELSWHIPCSSGQVLSLYELRAQNPPFTTNLMISTDYKSPVILNEKFLVKFNISNLSNSLKNLTINIPPSIIKQNGSSSSNNNSKLSSTNSGQTSDNPINSSNGGQSIKKQGSNLSLNRQQSSTKLNNQSNNNNNNNANTTNQNNLNSSRYIPVETTIQFSELSNKSLLSYEEIQRNSVNLLCLEKSVHIGPVNSKNSISASIEFLPLSVGIFEIQNITLYDSIEQITYSLKEPLQICCVSREHNNEEHNNNNKENNNENNKENINNNNNIINNNNDNNCNENNNNCNENNEEIK.

Disordered regions lie at residues Q123–T183, N249–N274, I592–S668, and N765–K815. Composition is skewed to polar residues over residues S135–T154 and D174–T183. Positions N595–S611 are enriched in low complexity. The span at G612–R639 shows a compositional bias: polar residues. The segment covering Q640–S668 has biased composition (low complexity). The segment covering N765–K782 has biased composition (basic and acidic residues). The span at E783 to E809 shows a compositional bias: low complexity.

This is an uncharacterized protein from Dictyostelium discoideum (Social amoeba).